The chain runs to 155 residues: Small ribosomal subunit protein uS7 (155 aa).

This sequence belongs to the universal ribosomal protein uS7 family. Part of the 30S ribosomal subunit. Contacts proteins S9 and S11.

One of the primary rRNA binding proteins, it binds directly to 16S rRNA where it nucleates assembly of the head domain of the 30S subunit. Is located at the subunit interface close to the decoding center, probably blocks exit of the E-site tRNA. This is Small ribosomal subunit protein uS7 from Desulforapulum autotrophicum (strain ATCC 43914 / DSM 3382 / VKM B-1955 / HRM2) (Desulfobacterium autotrophicum).